The chain runs to 249 residues: Triosephosphate isomerase (249 aa).

Substrate-binding residues include Asn12 and Lys14. Lys14 bears the N6-acetyllysine mark. Tyr68 carries the 3'-nitrotyrosine modification. Position 80 is a phosphoserine (Ser80). Residue His96 is the Electrophile of the active site. Ser106 carries the phosphoserine modification. Lys142 participates in a covalent cross-link: Glycyl lysine isopeptide (Lys-Gly) (interchain with G-Cter in SUMO1). Position 149 is an N6-succinyllysine (Lys149). N6-acetyllysine; alternate is present on Lys156. Lys156 is subject to N6-succinyllysine; alternate. Glu166 functions as the Proton acceptor in the catalytic mechanism. Phosphothreonine is present on Thr173. Residue Lys194 is modified to N6-acetyllysine; alternate. N6-succinyllysine; alternate is present on Lys194. N6-methyllysine; alternate is present on Lys194. Ser198 carries the phosphoserine modification. Tyr209 carries the post-translational modification 3'-nitrotyrosine. Position 212 is a phosphoserine (Ser212). Thr214 is subject to Phosphothreonine. Ser223 carries the phosphoserine modification. Lys238 bears the N6-acetyllysine mark.

It belongs to the triosephosphate isomerase family. Homodimer.

It is found in the cytoplasm. It carries out the reaction dihydroxyacetone phosphate = methylglyoxal + phosphate. The enzyme catalyses D-glyceraldehyde 3-phosphate = dihydroxyacetone phosphate. It functions in the pathway carbohydrate degradation; glycolysis; D-glyceraldehyde 3-phosphate from glycerone phosphate: step 1/1. The protein operates within carbohydrate biosynthesis; gluconeogenesis. In terms of biological role, triosephosphate isomerase is an extremely efficient metabolic enzyme that catalyzes the interconversion between dihydroxyacetone phosphate (DHAP) and D-glyceraldehyde-3-phosphate (G3P) in glycolysis and gluconeogenesis. Functionally, it is also responsible for the non-negligible production of methylglyoxal a reactive cytotoxic side-product that modifies and can alter proteins, DNA and lipids. In Rattus norvegicus (Rat), this protein is Triosephosphate isomerase (Tpi1).